The primary structure comprises 252 residues: Ubiquinone biosynthesis protein COQ4 homolog 1, mitochondrial (252 aa).

Residues H130, D131, H134, and E146 each contribute to the Zn(2+) site.

This sequence belongs to the COQ4 family. In terms of assembly, component of a multi-subunit COQ enzyme complex. It depends on Zn(2+) as a cofactor.

It is found in the mitochondrion inner membrane. The enzyme catalyses a 4-hydroxy-3-methoxy-5-(all-trans-polyprenyl)benzoate + H(+) = a 2-methoxy-6-(all-trans-polyprenyl)phenol + CO2. It participates in cofactor biosynthesis; ubiquinone biosynthesis. Its function is as follows. Lyase that catalyzes the C1-decarboxylation of 4-hydroxy-3-methoxy-5-(all-trans-polyprenyl)benzoic acid into 2-methoxy-6-(all-trans-polyprenyl)phenol during ubiquinone biosynthesis. The protein is Ubiquinone biosynthesis protein COQ4 homolog 1, mitochondrial of Trypanosoma cruzi (strain CL Brener).